Reading from the N-terminus, the 101-residue chain is Urease subunit beta (101 aa).

Belongs to the urease beta subunit family. Heterotrimer of UreA (gamma), UreB (beta) and UreC (alpha) subunits. Three heterotrimers associate to form the active enzyme.

The protein resides in the cytoplasm. The catalysed reaction is urea + 2 H2O + H(+) = hydrogencarbonate + 2 NH4(+). It participates in nitrogen metabolism; urea degradation; CO(2) and NH(3) from urea (urease route): step 1/1. In Psychromonas ingrahamii (strain DSM 17664 / CCUG 51855 / 37), this protein is Urease subunit beta.